Here is a 347-residue protein sequence, read N- to C-terminus: Phosphate acyltransferase (347 aa).

Belongs to the PlsX family. As to quaternary structure, homodimer. Probably interacts with PlsY.

The protein resides in the cytoplasm. The catalysed reaction is a fatty acyl-[ACP] + phosphate = an acyl phosphate + holo-[ACP]. It participates in lipid metabolism; phospholipid metabolism. In terms of biological role, catalyzes the reversible formation of acyl-phosphate (acyl-PO(4)) from acyl-[acyl-carrier-protein] (acyl-ACP). This enzyme utilizes acyl-ACP as fatty acyl donor, but not acyl-CoA. In Rhizobium meliloti (strain 1021) (Ensifer meliloti), this protein is Phosphate acyltransferase.